Here is a 207-residue protein sequence, read N- to C-terminus: Ribosomal RNA large subunit methyltransferase E (207 aa).

Residues 1–20 (MKRDPTKGRKTPDHYARKAK) form a disordered region. Residues Gly-56, Trp-58, Asp-76, Asp-94, and Asp-116 each coordinate S-adenosyl-L-methionine. Catalysis depends on Lys-156, which acts as the Proton acceptor.

This sequence belongs to the class I-like SAM-binding methyltransferase superfamily. RNA methyltransferase RlmE family.

It is found in the cytoplasm. The enzyme catalyses uridine(2552) in 23S rRNA + S-adenosyl-L-methionine = 2'-O-methyluridine(2552) in 23S rRNA + S-adenosyl-L-homocysteine + H(+). In terms of biological role, specifically methylates the uridine in position 2552 of 23S rRNA at the 2'-O position of the ribose in the fully assembled 50S ribosomal subunit. In Desulfosudis oleivorans (strain DSM 6200 / JCM 39069 / Hxd3) (Desulfococcus oleovorans), this protein is Ribosomal RNA large subunit methyltransferase E.